We begin with the raw amino-acid sequence, 245 residues long: Phycocyanobilin:ferredoxin oxidoreductase (245 aa).

This sequence belongs to the HY2 family.

The catalysed reaction is (2R,3Z)-phycocyanobilin + 4 oxidized [2Fe-2S]-[ferredoxin] = biliverdin IXalpha + 4 reduced [2Fe-2S]-[ferredoxin] + 4 H(+). Functionally, catalyzes the four-electron reduction of biliverdin IX-alpha (2-electron reduction at both the A and D rings); the reaction proceeds via an isolatable 2-electron intermediate, 181,182-dihydrobiliverdin. This is Phycocyanobilin:ferredoxin oxidoreductase from Microcystis aeruginosa (strain NIES-843 / IAM M-2473).